The primary structure comprises 189 residues: Peptidyl-tRNA hydrolase (189 aa).

Tyr15 is a binding site for tRNA. The Proton acceptor role is filled by His20. TRNA contacts are provided by Phe66, Asn68, and Asn114.

Belongs to the PTH family. As to quaternary structure, monomer.

It is found in the cytoplasm. It carries out the reaction an N-acyl-L-alpha-aminoacyl-tRNA + H2O = an N-acyl-L-amino acid + a tRNA + H(+). Hydrolyzes ribosome-free peptidyl-tRNAs (with 1 or more amino acids incorporated), which drop off the ribosome during protein synthesis, or as a result of ribosome stalling. Its function is as follows. Catalyzes the release of premature peptidyl moieties from peptidyl-tRNA molecules trapped in stalled 50S ribosomal subunits, and thus maintains levels of free tRNAs and 50S ribosomes. In Streptococcus mutans serotype c (strain ATCC 700610 / UA159), this protein is Peptidyl-tRNA hydrolase.